Here is a 324-residue protein sequence, read N- to C-terminus: Acetyl-coenzyme A carboxylase carboxyl transferase subunit alpha (324 aa).

One can recognise a CoA carboxyltransferase C-terminal domain in the interval 37–291; the sequence is KLDKRLDRLK…QEYVLQEWLK (255 aa).

The protein belongs to the AccA family. As to quaternary structure, acetyl-CoA carboxylase is a heterohexamer composed of biotin carboxyl carrier protein (AccB), biotin carboxylase (AccC) and two subunits each of ACCase subunit alpha (AccA) and ACCase subunit beta (AccD).

It localises to the cytoplasm. It carries out the reaction N(6)-carboxybiotinyl-L-lysyl-[protein] + acetyl-CoA = N(6)-biotinyl-L-lysyl-[protein] + malonyl-CoA. It functions in the pathway lipid metabolism; malonyl-CoA biosynthesis; malonyl-CoA from acetyl-CoA: step 1/1. Component of the acetyl coenzyme A carboxylase (ACC) complex. First, biotin carboxylase catalyzes the carboxylation of biotin on its carrier protein (BCCP) and then the CO(2) group is transferred by the carboxyltransferase to acetyl-CoA to form malonyl-CoA. This is Acetyl-coenzyme A carboxylase carboxyl transferase subunit alpha from Chlamydia trachomatis serovar D (strain ATCC VR-885 / DSM 19411 / UW-3/Cx).